The chain runs to 189 residues: MSVTSLSFPYGESIQWFCADNAKNLPSSPLKEWLLAPGSLTQKLKGCCDKFEVKILGEGQCVPLEGEYPKQNAVWVREVLLCLDSVPWVFARTLIPQSLLSTRQADFLGLGTRPLGELLFSQDSFVPGRIEIARFTTDSRLAQLAQSLAQNVEHELWGRRRYFHHDEEEMFVSEMFLPAAVQAMARLQP.

Substrate-binding residues include arginine 77, leucine 115, and glutamate 174.

It belongs to the UbiC family.

It localises to the cytoplasm. It carries out the reaction chorismate = 4-hydroxybenzoate + pyruvate. It participates in cofactor biosynthesis; ubiquinone biosynthesis. Functionally, removes the pyruvyl group from chorismate, with concomitant aromatization of the ring, to provide 4-hydroxybenzoate (4HB) for the ubiquinone pathway. This chain is Probable chorismate pyruvate-lyase, found in Shewanella sp. (strain MR-7).